The sequence spans 527 residues: Cytochrome P450 93B16 (527 aa).

A helical transmembrane segment spans residues Ser-5–Val-25. Position 455 (Cys-455) interacts with heme.

The protein belongs to the cytochrome P450 family. Heme serves as cofactor.

It is found in the membrane. It catalyses the reaction a flavanone + reduced [NADPH--hemoprotein reductase] + O2 = a flavone + oxidized [NADPH--hemoprotein reductase] + 2 H2O + H(+). The protein operates within secondary metabolite biosynthesis; flavonoid biosynthesis. Its function is as follows. Functions as a flavone synthase II (FNSII) that catalyzes the direct conversion of flavanones to flavones. In vitro, can convert liquiritigenin, naringenin and eriodictyol to 7,4'-dihydroxyflavone, apigenin and luteolin, respectively. The chain is Cytochrome P450 93B16 from Glycine max (Soybean).